The primary structure comprises 213 residues: Pyridoxine/pyridoxamine 5'-phosphate oxidase 2 (213 aa).

Substrate contacts are provided by residues 9-12 and Lys-67; that span reads RQRY. Residues 62–67, 77–78, Lys-84, and Gln-106 each bind FMN; these read RTVLLK and FT. Substrate contacts are provided by Tyr-124, Arg-128, and Ser-132. FMN contacts are provided by residues 141–142 and Trp-186; that span reads QS. Position 192–194 (192–194) interacts with substrate; that stretch reads RLH. Arg-196 is a binding site for FMN.

Belongs to the pyridoxamine 5'-phosphate oxidase family. In terms of assembly, homodimer. The cofactor is FMN.

It carries out the reaction pyridoxamine 5'-phosphate + O2 + H2O = pyridoxal 5'-phosphate + H2O2 + NH4(+). The enzyme catalyses pyridoxine 5'-phosphate + O2 = pyridoxal 5'-phosphate + H2O2. The protein operates within cofactor metabolism; pyridoxal 5'-phosphate salvage; pyridoxal 5'-phosphate from pyridoxamine 5'-phosphate: step 1/1. Its pathway is cofactor metabolism; pyridoxal 5'-phosphate salvage; pyridoxal 5'-phosphate from pyridoxine 5'-phosphate: step 1/1. In terms of biological role, catalyzes the oxidation of either pyridoxine 5'-phosphate (PNP) or pyridoxamine 5'-phosphate (PMP) into pyridoxal 5'-phosphate (PLP). The chain is Pyridoxine/pyridoxamine 5'-phosphate oxidase 2 from Hydrogenovibrio crunogenus (strain DSM 25203 / XCL-2) (Thiomicrospira crunogena).